Reading from the N-terminus, the 1119-residue chain is DNA-directed RNA polymerase D subunit 2b (1119 aa).

Asp-732 is a Mg(2+) binding site. Residues Cys-1055, Cys-1058, Cys-1080, and Cys-1083 each contribute to the Zn(2+) site. The C4-type zinc finger occupies 1055-1083 (CRKCKTYANVIERTPSSGRKIRGPYCRVC).

The protein belongs to the RNA polymerase beta chain family. Component of the RNA polymerase IVa and IVb (Pol IV) complexes.

It localises to the nucleus. The enzyme catalyses RNA(n) + a ribonucleoside 5'-triphosphate = RNA(n+1) + diphosphate. In terms of biological role, DNA-dependent RNA polymerase catalyzes the transcription of DNA into RNA using the four ribonucleoside triphosphates as substrates. Second largest component of RNA polymerase IVa and IVb which mediate short-interfering RNAs (siRNA) accumulation and subsequent RNA-directed DNA methylation-dependent (RdDM) silencing of endogenous repeated sequences, including transposable largest subunit. Also required for full erasure of methylation elements. Required for intercellular RNA interference (RNAi) leading to systemic post-transcriptional gene silencing. The polypeptide is DNA-directed RNA polymerase D subunit 2b (NRPD2b) (Arabidopsis thaliana (Mouse-ear cress)).